The sequence spans 368 residues: Heme A synthase (368 aa).

5 consecutive transmembrane segments (helical) span residues 14 to 34, 104 to 124, 129 to 149, 161 to 181, and 200 to 220; these read AVRI…LVGG, VIGI…AIGP, ALWI…WMVA, VRLA…VWTL, and ALAL…VAGL. A heme-binding site is contributed by histidine 264. Transmembrane regions (helical) follow at residues 266–283, 296–316, and 318–338; these read MLAY…IDAL, FLAL…AAPI, and LALV…LQAE. Histidine 322 lines the heme pocket.

This sequence belongs to the COX15/CtaA family. Type 2 subfamily. In terms of assembly, interacts with CtaB. The cofactor is heme b.

It localises to the cell membrane. It carries out the reaction Fe(II)-heme o + 2 A + H2O = Fe(II)-heme a + 2 AH2. The protein operates within porphyrin-containing compound metabolism; heme A biosynthesis; heme A from heme O: step 1/1. Functionally, catalyzes the conversion of heme O to heme A by two successive hydroxylations of the methyl group at C8. The first hydroxylation forms heme I, the second hydroxylation results in an unstable dihydroxymethyl group, which spontaneously dehydrates, resulting in the formyl group of heme A. The chain is Heme A synthase from Rhodopseudomonas palustris (strain ATCC BAA-98 / CGA009).